A 348-amino-acid polypeptide reads, in one-letter code: D-alanine--D-alanine ligase (348 aa).

The ATP-grasp domain occupies 132-334 (KRVLESIGIP…YPDLIEVLVT (203 aa)). Position 162 to 217 (162 to 217 (LARLTFPIFVKPANMGSSVGISKAQTKVELRKAIQLALTYDSRVLIEQGVVAREIE)) interacts with ATP. 3 residues coordinate Mg(2+): D288, E301, and N303.

The protein belongs to the D-alanine--D-alanine ligase family. Requires Mg(2+) as cofactor. It depends on Mn(2+) as a cofactor.

The protein localises to the cytoplasm. It carries out the reaction 2 D-alanine + ATP = D-alanyl-D-alanine + ADP + phosphate + H(+). Its pathway is cell wall biogenesis; peptidoglycan biosynthesis. Its function is as follows. Cell wall formation. The chain is D-alanine--D-alanine ligase from Streptococcus pyogenes serotype M2 (strain MGAS10270).